The chain runs to 390 residues: Methylthioribose-1-phosphate isomerase (390 aa).

The active-site Proton donor is the aspartate 258.

This sequence belongs to the eIF-2B alpha/beta/delta subunits family. MtnA subfamily.

It is found in the cytoplasm. It localises to the nucleus. It carries out the reaction 5-(methylsulfanyl)-alpha-D-ribose 1-phosphate = 5-(methylsulfanyl)-D-ribulose 1-phosphate. It participates in amino-acid biosynthesis; L-methionine biosynthesis via salvage pathway; L-methionine from S-methyl-5-thio-alpha-D-ribose 1-phosphate: step 1/6. Its function is as follows. Catalyzes the interconversion of methylthioribose-1-phosphate (MTR-1-P) into methylthioribulose-1-phosphate (MTRu-1-P). The protein is Methylthioribose-1-phosphate isomerase of Coccidioides posadasii (strain C735) (Valley fever fungus).